We begin with the raw amino-acid sequence, 149 residues long: Flagellar basal-body protein FlbY (149 aa).

As to quaternary structure, the basal body constitutes a major portion of the flagellar organelle and consists of five rings (E,L,P,S, and M) mounted on a central rod.

Its subcellular location is the bacterial flagellum basal body. The chain is Flagellar basal-body protein FlbY (flbY) from Caulobacter vibrioides (strain ATCC 19089 / CIP 103742 / CB 15) (Caulobacter crescentus).